The sequence spans 90 residues: Putative Fis-like DNA-binding protein (90 aa).

Positions 66–85 (QSRAAALLGIHRATLRKKLK) form a DNA-binding region, H-T-H motif.

Belongs to the transcriptional regulatory Fis family.

This is Putative Fis-like DNA-binding protein from Xylella fastidiosa (strain 9a5c).